The chain runs to 374 residues: MAVKVLVVDDSGFFRRRVSEILSADPTIQVVGTATNGKEAIDQALALKPDVITMDYEMPMMDGITAVRHIMQRCPTPVLMFSSLTHEGARVTLDALDAGAVDYLPKNFEDISRNPDKVKQMLCEKVHTISRSNRRLGSYARPAPVAAPVPASSPAPASSFASPAPARPAATARAAAPAASHSPAPKRKPYKLVAIGTSTGGPVALQRVLTQLPANFPAPIVLIQHMPAAFTKAFAERLDKLCRINVKEAEDGDMLRPGLALLAPGGKQMMIDGRGTVKILPGDERLNYKPCVDITFGSAAKSYGDKVLSVVLTGMGADGREGARLLKQGGSTVWAQDEASCVIYGMPMAIVKANLADAVYSLDDIGKHLVEACV.

The 118-residue stretch at 4–121 (KVLVVDDSGF…SRNPDKVKQM (118 aa)) folds into the Response regulatory domain. Asp-55 is subject to 4-aspartylphosphate. Residues 144–186 (PVAAPVPASSPAPASSFASPAPARPAATARAAAPAASHSPAPK) form a disordered region. Residues 154–183 (PAPASSFASPAPARPAATARAAAPAASHSP) are compositionally biased toward low complexity. In terms of domain architecture, CheB-type methylesterase spans 183–374 (PAPKRKPYKL…IGKHLVEACV (192 aa)). Residues Ser-198, His-225, and Asp-318 contribute to the active site.

Belongs to the CheB family. Post-translationally, phosphorylated by CheA. Phosphorylation of the N-terminal regulatory domain activates the methylesterase activity.

It is found in the cytoplasm. The enzyme catalyses [protein]-L-glutamate 5-O-methyl ester + H2O = L-glutamyl-[protein] + methanol + H(+). It catalyses the reaction L-glutaminyl-[protein] + H2O = L-glutamyl-[protein] + NH4(+). In terms of biological role, involved in chemotaxis. Part of a chemotaxis signal transduction system that modulates chemotaxis in response to various stimuli. Catalyzes the demethylation of specific methylglutamate residues introduced into the chemoreceptors (methyl-accepting chemotaxis proteins or MCP) by CheR. Also mediates the irreversible deamidation of specific glutamine residues to glutamic acid. The polypeptide is Protein-glutamate methylesterase/protein-glutamine glutaminase (Pseudomonas putida (Arthrobacter siderocapsulatus)).